The primary structure comprises 657 residues: Serine/threonine kinase NLK (657 aa).

A Protein kinase domain is found at 208-554 (SQPDRPIGYG…VEEALSHPYL (347 aa)). Residues 214-222 (IGYGAFGVV) and Lys237 contribute to the ATP site. Asp391 serves as the catalytic Proton acceptor.

It belongs to the protein kinase superfamily. Ser/Thr protein kinase family. In terms of assembly, component of the beta-catenin-lit-1 complex (also called the lit-1/wrm-1 complex or the wrm-1/lit-1 kinase complex) at least composed of lit-1 and wrm-1. Interacts with wrm-1 (via N-terminus); the interaction is direct and activates lit-1 kinase activity which leads to the phosphorylation of pop-1. This promotes pop-1 interaction with par-5 and translocation of pop-1 from the nucleus to the cytoplasm. Interacts with pop-1 (when phosphorylated on 'Ser-125'); the interaction is dependent on the beta-catenin-lit-1 complex. Mg(2+) is required as a cofactor.

It is found in the cytoplasm. The protein resides in the cell cortex. Its subcellular location is the nucleus. It catalyses the reaction L-seryl-[protein] + ATP = O-phospho-L-seryl-[protein] + ADP + H(+). The catalysed reaction is L-threonyl-[protein] + ATP = O-phospho-L-threonyl-[protein] + ADP + H(+). Its function is as follows. Has a role in the Wnt signaling pathway controlling the asymmetry of cell divisions during embryogenesis. Operates in the AB and EMS cell lineages influencing cell specification. Required for body wall muscle development, endoderm development, pop-1 asymmetry and T-cell division asymmetry. Component of the beta-catenin-lit-1 complex which promotes the phosphorylation, down-regulation and subcellular relocation of pop-1. Regulates plp-1 nuclear localization in embryos. Plays a role in male tail tip morphogenesis. This chain is Serine/threonine kinase NLK, found in Caenorhabditis briggsae.